Here is a 440-residue protein sequence, read N- to C-terminus: 3-phosphoshikimate 1-carboxyvinyltransferase (440 aa).

3-phosphoshikimate contacts are provided by K26, S27, and R31. K26 contributes to the phosphoenolpyruvate binding site. The phosphoenolpyruvate site is built by G99 and R127. S172, Q174, D320, and K347 together coordinate 3-phosphoshikimate. Q174 lines the phosphoenolpyruvate pocket. The Proton acceptor role is filled by D320. Residues R351 and R392 each contribute to the phosphoenolpyruvate site.

The protein belongs to the EPSP synthase family. Monomer.

The protein resides in the cytoplasm. The catalysed reaction is 3-phosphoshikimate + phosphoenolpyruvate = 5-O-(1-carboxyvinyl)-3-phosphoshikimate + phosphate. It functions in the pathway metabolic intermediate biosynthesis; chorismate biosynthesis; chorismate from D-erythrose 4-phosphate and phosphoenolpyruvate: step 6/7. Catalyzes the transfer of the enolpyruvyl moiety of phosphoenolpyruvate (PEP) to the 5-hydroxyl of shikimate-3-phosphate (S3P) to produce enolpyruvyl shikimate-3-phosphate and inorganic phosphate. In Xanthomonas euvesicatoria pv. vesicatoria (strain 85-10) (Xanthomonas campestris pv. vesicatoria), this protein is 3-phosphoshikimate 1-carboxyvinyltransferase.